The primary structure comprises 229 residues: Probable queuosine precursor transporter (229 aa).

7 helical membrane passes run 6-26 (FWIFFAIIHFIIVLLFYKGFG), 28-48 (MGLFVWIGFATVCANLQVVKT), 49-69 (VELFGLTATLGNVMYGTIFFA), 86-106 (VWLGFSTLLTLTFVMQGVLLF), 118-138 (LETIFGFLPRVALGSLLAFIF), 160-182 (LWLRNGGSTAVSQLFDTFIFTAV), and 192-214 (VWLHIFISTYLIKFAVSLISLPY).

Belongs to the vitamin uptake transporter (VUT/ECF) (TC 2.A.88) family. Q precursor transporter subfamily.

The protein resides in the cell membrane. In terms of biological role, involved in the import of queuosine (Q) precursors, required for Q precursor salvage. This Bacillus subtilis (strain 168) protein is Probable queuosine precursor transporter (ypdP).